Here is a 357-residue protein sequence, read N- to C-terminus: 4-hydroxyphenylpyruvate dioxygenase (357 aa).

2 VOC domains span residues 12-129 and 158-313; these read GFEF…LIDR and IIDH…IFSE. His-161, His-240, and Glu-322 together coordinate Fe cation.

This sequence belongs to the 4HPPD family. In terms of assembly, homotetramer. Fe cation is required as a cofactor.

The enzyme catalyses 3-(4-hydroxyphenyl)pyruvate + O2 = homogentisate + CO2. The protein operates within amino-acid degradation; L-phenylalanine degradation; acetoacetate and fumarate from L-phenylalanine: step 3/6. The protein is 4-hydroxyphenylpyruvate dioxygenase (hpd) of Pseudomonas sp. (strain P.J. 874).